A 92-amino-acid polypeptide reads, in one-letter code: Large ribosomal subunit protein bL28 (92 aa).

The disordered stretch occupies residues 1-34 (MGRECEITGKKTMFGNNVPRKGLSRKKGGGGQHI).

The protein belongs to the bacterial ribosomal protein bL28 family.

The protein is Large ribosomal subunit protein bL28 of Borrelia turicatae (strain 91E135).